A 271-amino-acid polypeptide reads, in one-letter code: ATP synthase subunit delta (271 aa).

The protein belongs to the ATPase delta chain family. F-type ATPases have 2 components, F(1) - the catalytic core - and F(0) - the membrane proton channel. F(1) has five subunits: alpha(3), beta(3), gamma(1), delta(1), epsilon(1). F(0) has three main subunits: a(1), b(2) and c(10-14). The alpha and beta chains form an alternating ring which encloses part of the gamma chain. F(1) is attached to F(0) by a central stalk formed by the gamma and epsilon chains, while a peripheral stalk is formed by the delta and b chains.

The protein localises to the cell membrane. Its function is as follows. F(1)F(0) ATP synthase produces ATP from ADP in the presence of a proton or sodium gradient. F-type ATPases consist of two structural domains, F(1) containing the extramembraneous catalytic core and F(0) containing the membrane proton channel, linked together by a central stalk and a peripheral stalk. During catalysis, ATP synthesis in the catalytic domain of F(1) is coupled via a rotary mechanism of the central stalk subunits to proton translocation. In terms of biological role, this protein is part of the stalk that links CF(0) to CF(1). It either transmits conformational changes from CF(0) to CF(1) or is implicated in proton conduction. This Corynebacterium kroppenstedtii (strain DSM 44385 / JCM 11950 / CIP 105744 / CCUG 35717) protein is ATP synthase subunit delta.